A 407-amino-acid polypeptide reads, in one-letter code: UDP-N-acetylglucosamine--N-acetylmuramyl-(pentapeptide) pyrophosphoryl-undecaprenol N-acetylglucosamine transferase (407 aa).

A disordered region spans residues 1–21 (MNNSVREPTRGRRGSPPVADA). UDP-N-acetyl-alpha-D-glucosamine-binding positions include 38–40 (TAG), N157, S228, and Q324.

The protein belongs to the glycosyltransferase 28 family. MurG subfamily.

The protein resides in the cell membrane. The enzyme catalyses di-trans,octa-cis-undecaprenyl diphospho-N-acetyl-alpha-D-muramoyl-L-alanyl-D-glutamyl-meso-2,6-diaminopimeloyl-D-alanyl-D-alanine + UDP-N-acetyl-alpha-D-glucosamine = di-trans,octa-cis-undecaprenyl diphospho-[N-acetyl-alpha-D-glucosaminyl-(1-&gt;4)]-N-acetyl-alpha-D-muramoyl-L-alanyl-D-glutamyl-meso-2,6-diaminopimeloyl-D-alanyl-D-alanine + UDP + H(+). It functions in the pathway cell wall biogenesis; peptidoglycan biosynthesis. Its function is as follows. Cell wall formation. Catalyzes the transfer of a GlcNAc subunit on undecaprenyl-pyrophosphoryl-MurNAc-pentapeptide (lipid intermediate I) to form undecaprenyl-pyrophosphoryl-MurNAc-(pentapeptide)GlcNAc (lipid intermediate II). This is UDP-N-acetylglucosamine--N-acetylmuramyl-(pentapeptide) pyrophosphoryl-undecaprenol N-acetylglucosamine transferase from Mycobacterium leprae (strain TN).